The following is a 509-amino-acid chain: tRNA-2-methylthio-N(6)-dimethylallyladenosine synthase (509 aa).

The span at 1 to 15 (MNEQQRLASQQANSS) shows a compositional bias: polar residues. Residues 1–25 (MNEQQRLASQQANSSTKKEEKDYSK) form a disordered region. The segment covering 16–25 (TKKEEKDYSK) has biased composition (basic and acidic residues). The 119-residue stretch at 66–184 (RKFYIRTYGC…LPYILKDAMF (119 aa)) folds into the MTTase N-terminal domain. Positions 75, 111, 145, 221, 225, and 228 each coordinate [4Fe-4S] cluster. A Radical SAM core domain is found at 207 to 437 (RRGDIKAWVN…NTLVNTLAIE (231 aa)). A TRAM domain is found at 440–503 (SRYKGQIVEV…TWSLNGELVE (64 aa)).

It belongs to the methylthiotransferase family. MiaB subfamily. As to quaternary structure, monomer. The cofactor is [4Fe-4S] cluster.

It is found in the cytoplasm. The catalysed reaction is N(6)-dimethylallyladenosine(37) in tRNA + (sulfur carrier)-SH + AH2 + 2 S-adenosyl-L-methionine = 2-methylsulfanyl-N(6)-dimethylallyladenosine(37) in tRNA + (sulfur carrier)-H + 5'-deoxyadenosine + L-methionine + A + S-adenosyl-L-homocysteine + 2 H(+). In terms of biological role, catalyzes the methylthiolation of N6-(dimethylallyl)adenosine (i(6)A), leading to the formation of 2-methylthio-N6-(dimethylallyl)adenosine (ms(2)i(6)A) at position 37 in tRNAs that read codons beginning with uridine. The polypeptide is tRNA-2-methylthio-N(6)-dimethylallyladenosine synthase (Bacillus cereus (strain B4264)).